The chain runs to 361 residues: 3-dehydroquinate synthase (361 aa).

NAD(+) contacts are provided by residues 72–77 (SGEKEK), 130–131 (TT), Lys-142, and Lys-151. Positions 184, 247, and 264 each coordinate Zn(2+).

It belongs to the sugar phosphate cyclases superfamily. Dehydroquinate synthase family. Requires Co(2+) as cofactor. Zn(2+) is required as a cofactor. NAD(+) serves as cofactor.

The protein resides in the cytoplasm. It catalyses the reaction 7-phospho-2-dehydro-3-deoxy-D-arabino-heptonate = 3-dehydroquinate + phosphate. The protein operates within metabolic intermediate biosynthesis; chorismate biosynthesis; chorismate from D-erythrose 4-phosphate and phosphoenolpyruvate: step 2/7. In terms of biological role, catalyzes the conversion of 3-deoxy-D-arabino-heptulosonate 7-phosphate (DAHP) to dehydroquinate (DHQ). The sequence is that of 3-dehydroquinate synthase from Bacillus mycoides (strain KBAB4) (Bacillus weihenstephanensis).